Consider the following 370-residue polypeptide: uncharacterized protein (370 aa).

This is an uncharacterized protein from Caenorhabditis elegans.